A 480-amino-acid polypeptide reads, in one-letter code: Aspartyl/glutamyl-tRNA(Asn/Gln) amidotransferase subunit B (480 aa).

This sequence belongs to the GatB/GatE family. GatB subfamily. As to quaternary structure, heterotrimer of A, B and C subunits.

It carries out the reaction L-glutamyl-tRNA(Gln) + L-glutamine + ATP + H2O = L-glutaminyl-tRNA(Gln) + L-glutamate + ADP + phosphate + H(+). It catalyses the reaction L-aspartyl-tRNA(Asn) + L-glutamine + ATP + H2O = L-asparaginyl-tRNA(Asn) + L-glutamate + ADP + phosphate + 2 H(+). Allows the formation of correctly charged Asn-tRNA(Asn) or Gln-tRNA(Gln) through the transamidation of misacylated Asp-tRNA(Asn) or Glu-tRNA(Gln) in organisms which lack either or both of asparaginyl-tRNA or glutaminyl-tRNA synthetases. The reaction takes place in the presence of glutamine and ATP through an activated phospho-Asp-tRNA(Asn) or phospho-Glu-tRNA(Gln). This is Aspartyl/glutamyl-tRNA(Asn/Gln) amidotransferase subunit B from Hahella chejuensis (strain KCTC 2396).